A 366-amino-acid chain; its full sequence is Isocitrate dehydrogenase [NAD] subunit alpha, mitochondrial (366 aa).

Residues 1–27 (MAGPAWISKVSRLLGAFHNPKQVTRGF) constitute a mitochondrion transit peptide. K77 carries the post-translational modification N6-succinyllysine. Residue T101 is modified to Phosphothreonine. Residues R115, R125, and R146 each coordinate substrate. Position 223 is an N6-acetyllysine (K223). Mg(2+) contacts are provided by D233, D257, and D261. An N6-acetyllysine; alternate modification is found at K343. N6-succinyllysine; alternate is present on K343. An N6-succinyllysine modification is found at K350.

Belongs to the isocitrate and isopropylmalate dehydrogenases family. Heterooligomer of subunits alpha (IDH3A), beta (IDH3B), and gamma (IDH3G) in the apparent ratio of 2:1:1. The heterodimer containing one IDH3A and one IDH3B subunit and the heterodimer containing one IDH3A and one IDH3G subunit assemble into a heterotetramer (which contains two subunits of IDH3A, one of IDH3B and one of IDH3G) and further into the heterooctamer. The cofactor is Mg(2+). Mn(2+) serves as cofactor.

The protein localises to the mitochondrion. It catalyses the reaction D-threo-isocitrate + NAD(+) = 2-oxoglutarate + CO2 + NADH. With respect to regulation, the heterotetramer and the heterodimer composed of IDH3A and IDH3G subunits can be allosterically activated by citrate (CIT) or/and ADP, and the two activators can act independently or synergistically. The heterodimer composed of IDH3A and IDH3B subunits cannot be allosterically regulated and the allosteric regulation of the heterotetramer is through the IDH3G subunit and not the IDH3B subunit. The IDH3G subunit contains the allosteric site which consists of a CIT-binding site and an ADP-binding site, and the binding of CIT and ADP causes conformational changes at the allosteric site which are transmitted to the active site in the catalytic subunit (IDH3A) through a cascade of conformational changes at the heterodimer interface, leading to stabilization of the isocitrate-binding at the active site and thus activation of the enzyme. ATP can activate the heterotetramer and the heterodimer composed of IDH3A and IDH3G subunits at low concentrations but inhibits their activities at high concentrations, whereas ATP exhibits only inhibitory effect on the heterodimer composed of IDH3A and IDH3B subunits. In terms of biological role, catalytic subunit of the enzyme which catalyzes the decarboxylation of isocitrate (ICT) into alpha-ketoglutarate. The heterodimer composed of the alpha (IDH3A) and beta (IDH3B) subunits and the heterodimer composed of the alpha (IDH3A) and gamma (IDH3G) subunits, have considerable basal activity but the full activity of the heterotetramer (containing two subunits of IDH3A, one of IDH3B and one of IDH3G) requires the assembly and cooperative function of both heterodimers. In Pongo abelii (Sumatran orangutan), this protein is Isocitrate dehydrogenase [NAD] subunit alpha, mitochondrial.